Reading from the N-terminus, the 184-residue chain is ATP synthase subunit b, chloroplastic (184 aa).

Residues 27–49 traverse the membrane as a helical segment; the sequence is LATNPINLSVVLGVLIFFGKGVL.

It belongs to the ATPase B chain family. In terms of assembly, F-type ATPases have 2 components, F(1) - the catalytic core - and F(0) - the membrane proton channel. F(1) has five subunits: alpha(3), beta(3), gamma(1), delta(1), epsilon(1). F(0) has four main subunits: a(1), b(1), b'(1) and c(10-14). The alpha and beta chains form an alternating ring which encloses part of the gamma chain. F(1) is attached to F(0) by a central stalk formed by the gamma and epsilon chains, while a peripheral stalk is formed by the delta, b and b' chains.

The protein resides in the plastid. The protein localises to the chloroplast thylakoid membrane. Functionally, f(1)F(0) ATP synthase produces ATP from ADP in the presence of a proton or sodium gradient. F-type ATPases consist of two structural domains, F(1) containing the extramembraneous catalytic core and F(0) containing the membrane proton channel, linked together by a central stalk and a peripheral stalk. During catalysis, ATP synthesis in the catalytic domain of F(1) is coupled via a rotary mechanism of the central stalk subunits to proton translocation. In terms of biological role, component of the F(0) channel, it forms part of the peripheral stalk, linking F(1) to F(0). This chain is ATP synthase subunit b, chloroplastic, found in Piper cenocladum (Ant piper).